The chain runs to 158 residues: C-type lectin mannose-binding isoform (158 aa).

An N-terminal signal peptide occupies residues 1 to 23 (MGRFLLVTLSLLVGAFSLNEANS). 4 disulfides stabilise this stretch: Cys-26-Cys-37, Cys-54-Cys-154, Cys-61-Cys-156, and Cys-129-Cys-146. Residues 33-155 (KNGFCYKVFN…CKALYSFICQ (123 aa)) form the C-type lectin domain. A Mannose-binding motif is present at residues 119–121 (EPN). Residue Asn-121 is glycosylated (N-linked (GlcNAc...) asparagine). Ca(2+) contacts are provided by Glu-127, Asn-142, and Asp-143.

It belongs to the true venom lectin family. Dimer. Probably disulfide-linked homodimer. In terms of tissue distribution, expressed by the venom gland.

It localises to the secreted. Functionally, mannose-binding lectin that binds to and agglutinates rabbit (but not human) erythrocytes in a calcium-dependent manner. This Oxyuranus scutellatus (Coastal taipan) protein is C-type lectin mannose-binding isoform.